The following is a 140-amino-acid chain: Nucleoside triphosphatase NudI (140 aa).

Residues 1–140 (MRHRTIVCPL…RVTLSLKGLL (140 aa)) form the Nudix hydrolase domain. The short motif at 38–58 (GVEPGERIEEALRREIREELG) is the Nudix box element.

Belongs to the Nudix hydrolase family. NudI subfamily. Monomer. It depends on Mg(2+) as a cofactor.

It catalyses the reaction a ribonucleoside 5'-triphosphate + H2O = a ribonucleoside 5'-phosphate + diphosphate + H(+). The enzyme catalyses a 2'-deoxyribonucleoside 5'-triphosphate + H2O = a 2'-deoxyribonucleoside 5'-phosphate + diphosphate + H(+). The catalysed reaction is dUTP + H2O = dUMP + diphosphate + H(+). It carries out the reaction dTTP + H2O = dTMP + diphosphate + H(+). It catalyses the reaction dCTP + H2O = dCMP + diphosphate + H(+). Its function is as follows. Catalyzes the hydrolysis of nucleoside triphosphates, with a preference for pyrimidine deoxynucleoside triphosphates (dUTP, dTTP and dCTP). The chain is Nucleoside triphosphatase NudI from Klebsiella pneumoniae subsp. pneumoniae (strain ATCC 700721 / MGH 78578).